The sequence spans 204 residues: B9 domain-containing protein 1 (204 aa).

One can recognise a C2 B9-type domain in the interval 9–127 (FLLMVNGQVE…TIPMFVPEST (119 aa)). A disordered region spans residues 182–204 (GYDTGPSDTQGVLGPSPPQSFPQ).

Belongs to the B9D family. In terms of assembly, part of the tectonic-like complex (also named B9 complex).

Its subcellular location is the cytoplasm. The protein localises to the cytoskeleton. It is found in the cilium basal body. It localises to the cilium axoneme. Component of the tectonic-like complex, a complex localized at the transition zone of primary cilia and acting as a barrier that prevents diffusion of transmembrane proteins between the cilia and plasma membranes. Required for ciliogenesis and sonic hedgehog/SHH signaling. The polypeptide is B9 domain-containing protein 1 (B9D1) (Homo sapiens (Human)).